The following is a 522-amino-acid chain: Protein nucleotidyltransferase YdiU (522 aa).

8 residues coordinate ATP: G109, G111, R112, K132, D144, G145, R195, and R202. The active-site Proton acceptor is the D271. 2 residues coordinate Mg(2+): N272 and D281. D281 serves as a coordination point for ATP.

Belongs to the SELO family. Requires Mg(2+) as cofactor. The cofactor is Mn(2+).

The enzyme catalyses L-seryl-[protein] + ATP = 3-O-(5'-adenylyl)-L-seryl-[protein] + diphosphate. It carries out the reaction L-threonyl-[protein] + ATP = 3-O-(5'-adenylyl)-L-threonyl-[protein] + diphosphate. It catalyses the reaction L-tyrosyl-[protein] + ATP = O-(5'-adenylyl)-L-tyrosyl-[protein] + diphosphate. The catalysed reaction is L-histidyl-[protein] + UTP = N(tele)-(5'-uridylyl)-L-histidyl-[protein] + diphosphate. The enzyme catalyses L-seryl-[protein] + UTP = O-(5'-uridylyl)-L-seryl-[protein] + diphosphate. It carries out the reaction L-tyrosyl-[protein] + UTP = O-(5'-uridylyl)-L-tyrosyl-[protein] + diphosphate. In terms of biological role, nucleotidyltransferase involved in the post-translational modification of proteins. It can catalyze the addition of adenosine monophosphate (AMP) or uridine monophosphate (UMP) to a protein, resulting in modifications known as AMPylation and UMPylation. The protein is Protein nucleotidyltransferase YdiU of Burkholderia ambifaria (strain MC40-6).